The following is a 130-amino-acid chain: 3-aminoacrylate deaminase RutC (130 aa).

Belongs to the RutC family.

The enzyme catalyses (Z)-3-aminoacrylate + H2O + H(+) = 3-oxopropanoate + NH4(+). Involved in pyrimidine catabolism. Catalyzes the deamination of 3-aminoacrylate to malonic semialdehyde, a reaction that can also occur spontaneously. RutC may facilitate the reaction and modulate the metabolic fitness, rather than catalyzing essential functions. The sequence is that of 3-aminoacrylate deaminase RutC from Variovorax paradoxus (strain S110).